Consider the following 433-residue polypeptide: Trigger factor (433 aa).

The PPIase FKBP-type domain occupies 163-248; it reads GDFVTFDFKG…IKEIKVKELP (86 aa).

It belongs to the FKBP-type PPIase family. Tig subfamily.

The protein resides in the cytoplasm. It carries out the reaction [protein]-peptidylproline (omega=180) = [protein]-peptidylproline (omega=0). Functionally, involved in protein export. Acts as a chaperone by maintaining the newly synthesized protein in an open conformation. Functions as a peptidyl-prolyl cis-trans isomerase. This is Trigger factor from Geotalea uraniireducens (strain Rf4) (Geobacter uraniireducens).